The following is a 397-amino-acid chain: MNIHEYQAKALLKSFGAPVAEGVPVLSLADVQKAIDTLPGPLWVVKSQIHAGGRGKGKFIEKEAGEKGGVRLAFNKEDVKKHAEAMLGNHLVTAQTSAAGKQVNRLYIEDGADIEKELYLSILVDRATSNVAFVVSTEGGMDIEAVAHDTPEKILTVQIDPMAGVTPADAAKINSALNLSGSAAEDGLKLYPILYKAFVEKDMAMLEVNPLIVMKDGHLRVLDAKVSFDGNALFRHPDVAALKDETEQDAKELEAAEWDLAYIALDGTIGCMVNGAGLAMATMDIIKLYGEEPANFCDVGGGAGKEKVAAAFKIIMKDPNVKGILVNIFGGIMKCDVIAEGVIAAVKETNLAVPLVVRLEGTNVDLGKKIIRESGLNVIPADDLDDAAQKIVKAVRG.

Positions 9-254 (KALLKSFGAP…ETEQDAKELE (246 aa)) constitute an ATP-grasp domain. Residues Lys46, 53–55 (GRG), Glu109, Ala112, and Glu117 each bind ATP. Residues Asn209 and Asp223 each contribute to the Mg(2+) site. Residues Asn274 and 331–333 (GIM) each bind substrate.

This sequence belongs to the succinate/malate CoA ligase beta subunit family. Heterotetramer of two alpha and two beta subunits. Mg(2+) serves as cofactor.

It carries out the reaction succinate + ATP + CoA = succinyl-CoA + ADP + phosphate. It catalyses the reaction GTP + succinate + CoA = succinyl-CoA + GDP + phosphate. Its pathway is carbohydrate metabolism; tricarboxylic acid cycle; succinate from succinyl-CoA (ligase route): step 1/1. In terms of biological role, succinyl-CoA synthetase functions in the citric acid cycle (TCA), coupling the hydrolysis of succinyl-CoA to the synthesis of either ATP or GTP and thus represents the only step of substrate-level phosphorylation in the TCA. The beta subunit provides nucleotide specificity of the enzyme and binds the substrate succinate, while the binding sites for coenzyme A and phosphate are found in the alpha subunit. This Hyphomonas neptunium (strain ATCC 15444) protein is Succinate--CoA ligase [ADP-forming] subunit beta.